Consider the following 61-residue polypeptide: UPF0370 protein Spro_3503 (61 aa).

A helical membrane pass occupies residues 3–23; it reads WLADYWWIILLILVGMIISGI. Over residues 38 to 48 the composition is skewed to basic and acidic residues; it reads KPELPPHRDNN. Residues 38–61 are disordered; the sequence is KPELPPHRDNNAEWDDDDDWPKKK. Acidic residues predominate over residues 49 to 61; sequence AEWDDDDDWPKKK.

It belongs to the UPF0370 family.

Its subcellular location is the cell membrane. The polypeptide is UPF0370 protein Spro_3503 (Serratia proteamaculans (strain 568)).